Here is a 420-residue protein sequence, read N- to C-terminus: L-cysteine:1D-myo-inositol 2-amino-2-deoxy-alpha-D-glucopyranoside ligase (420 aa).

Cys43 contributes to the Zn(2+) binding site. L-cysteinyl-5'-AMP contacts are provided by residues 43–46 (CGIT), Thr58, and 81–83 (NIT). A 'HIGH' region motif is present at residues 45–55 (ITPYDATHLGH). The short motif at 187 to 192 (ERGGDP) is the 'ERGGDP' region element. Trp227 lines the L-cysteinyl-5'-AMP pocket. Cys231 contributes to the Zn(2+) binding site. Residue 249-251 (GSD) participates in L-cysteinyl-5'-AMP binding. His256 serves as a coordination point for Zn(2+). Ile289 provides a ligand contact to L-cysteinyl-5'-AMP. The 'KMSKS' region motif lies at 295-299 (KMSKS).

Belongs to the class-I aminoacyl-tRNA synthetase family. MshC subfamily. In terms of assembly, monomer. Zn(2+) serves as cofactor.

The enzyme catalyses 1D-myo-inositol 2-amino-2-deoxy-alpha-D-glucopyranoside + L-cysteine + ATP = 1D-myo-inositol 2-(L-cysteinylamino)-2-deoxy-alpha-D-glucopyranoside + AMP + diphosphate + H(+). Its function is as follows. Catalyzes the ATP-dependent condensation of GlcN-Ins and L-cysteine to form L-Cys-GlcN-Ins. This is L-cysteine:1D-myo-inositol 2-amino-2-deoxy-alpha-D-glucopyranoside ligase from Segniliparus rotundus (strain ATCC BAA-972 / CDC 1076 / CIP 108378 / DSM 44985 / JCM 13578).